Consider the following 444-residue polypeptide: N-succinylarginine dihydrolase (444 aa).

Substrate contacts are provided by residues 19-28 (SGLSVGNIAS), N110, and 137-138 (HR). E174 is an active-site residue. R214 serves as a coordination point for substrate. H250 is an active-site residue. 2 residues coordinate substrate: D252 and N362. C368 acts as the Nucleophile in catalysis.

The protein belongs to the succinylarginine dihydrolase family. Homodimer.

The catalysed reaction is N(2)-succinyl-L-arginine + 2 H2O + 2 H(+) = N(2)-succinyl-L-ornithine + 2 NH4(+) + CO2. The protein operates within amino-acid degradation; L-arginine degradation via AST pathway; L-glutamate and succinate from L-arginine: step 2/5. Functionally, catalyzes the hydrolysis of N(2)-succinylarginine into N(2)-succinylornithine, ammonia and CO(2). This chain is N-succinylarginine dihydrolase, found in Aliivibrio salmonicida (strain LFI1238) (Vibrio salmonicida (strain LFI1238)).